Here is a 345-residue protein sequence, read N- to C-terminus: Anthranilate phosphoribosyltransferase (345 aa).

Residues Gly80, 83–84 (GD), Thr88, 90–93 (NIST), 108–116 (KHGNRSVTS), and Ser120 each bind 5-phospho-alpha-D-ribose 1-diphosphate. Gly80 is a binding site for anthranilate. Residue Ser92 coordinates Mg(2+). Anthranilate is bound at residue Asn111. An anthranilate-binding site is contributed by Arg166. Positions 229 and 230 each coordinate Mg(2+).

The protein belongs to the anthranilate phosphoribosyltransferase family. In terms of assembly, homodimer. Mg(2+) serves as cofactor.

The enzyme catalyses N-(5-phospho-beta-D-ribosyl)anthranilate + diphosphate = 5-phospho-alpha-D-ribose 1-diphosphate + anthranilate. It functions in the pathway amino-acid biosynthesis; L-tryptophan biosynthesis; L-tryptophan from chorismate: step 2/5. Its function is as follows. Catalyzes the transfer of the phosphoribosyl group of 5-phosphorylribose-1-pyrophosphate (PRPP) to anthranilate to yield N-(5'-phosphoribosyl)-anthranilate (PRA). This chain is Anthranilate phosphoribosyltransferase, found in Chlorobium phaeobacteroides (strain BS1).